Consider the following 356-residue polypeptide: Alanine racemase (356 aa).

Catalysis depends on Lys34, which acts as the Proton acceptor; specific for D-alanine. Lys34 carries the N6-(pyridoxal phosphate)lysine modification. Arg129 is a substrate binding site. The active-site Proton acceptor; specific for L-alanine is the Tyr253. Met301 is a binding site for substrate.

This sequence belongs to the alanine racemase family. Requires pyridoxal 5'-phosphate as cofactor.

It catalyses the reaction L-alanine = D-alanine. The protein operates within amino-acid biosynthesis; D-alanine biosynthesis; D-alanine from L-alanine: step 1/1. Catalyzes the interconversion of L-alanine and D-alanine. May also act on other amino acids. The protein is Alanine racemase (alr) of Nitrosococcus oceani (strain ATCC 19707 / BCRC 17464 / JCM 30415 / NCIMB 11848 / C-107).